The sequence spans 484 residues: Serine/arginine-rich splicing factor 11 (484 aa).

Residues 1-33 form a disordered region; it reads MSNTTVVPSTAGPGPSGGPGGGGGGGGGGGGTE. S2 is subject to N-acetylserine. Over residues 14–32 the composition is skewed to gly residues; it reads GPSGGPGGGGGGGGGGGGT. Positions 33–113 constitute an RRM domain; that stretch reads EVIQVTNVSP…ALIVVPYAEG (81 aa). K197 participates in a covalent cross-link: Glycyl lysine isopeptide (Lys-Gly) (interchain with G-Cter in SUMO2). The residue at position 207 (S207) is a Phosphoserine. Residue K211 forms a Glycyl lysine isopeptide (Lys-Gly) (interchain with G-Cter in SUMO2) linkage. At S212 the chain carries Phosphoserine. The interval 233 to 484 is disordered; it reads ISAAIEPDKK…HHEEDMDMSD (252 aa). A compositionally biased stretch (basic residues) spans 244-308; that stretch reads EKRRHSRSRS…ERGRRSRSTS (65 aa). 10 consecutive repeat copies span residues 247 to 255, 258 to 265, 267 to 274, 275 to 282, 285 to 292, 293 to 300, 302 to 309, 321 to 328, 334 to 341, and 346 to 353. The 10 X 8 AA approximate repeats of R-R-S-R-S-R-S-R stretch occupies residues 247–353; it reads RHSRSRSRSR…RRRRSRSGTR (107 aa). Residues 309-320 are compositionally biased toward basic and acidic residues; it reads KTRDKKKEDKEK. S323 carries the phosphoserine modification. A Phosphothreonine modification is found at T325. The span at 334 to 379 shows a compositional bias: basic residues; it reads RRSRSASRERRRRRSRSGTRSPKKPRSPKRKLSRSPSPRRHKKEKK. Basic and acidic residues-rich tracts occupy residues 380–395, 402–424, and 433–478; these read KDKD…ERST, KDKE…VTRD, and DSEK…HHEE. Phosphoserine is present on residues S414 and S434. T447 carries the phosphothreonine modification. Phosphoserine is present on residues S449, S456, S464, and S483.

Belongs to the splicing factor SR family. As to quaternary structure, interacts with PUF60.

It is found in the nucleus. In terms of biological role, may function in pre-mRNA splicing. The sequence is that of Serine/arginine-rich splicing factor 11 (SRSF11) from Homo sapiens (Human).